The primary structure comprises 495 residues: MRRSMPLAQLLPDIPQARDVVISGLVMDSREVQPGDAFVAVAGFGVHGLCFIEDACARGAVAILFEPPAPQGVSVPDGAIAVHGLRARLGAMADRFHGHPSQAMTMVGVTGTNGKTSTVQLLAQAWHRLGVRSATCGTLGVGLYDQLVPTGFTTPLVLQLHQCLGQLRDDGAQAVAMEVSSHALDQGRVDGVHYDVAVFTNLTRDHLDYHGDMEHYGEAKARLFAHQDVQAAVINVDDLFGLRLLHGLANGVRRVGVSVCGHTDADVMAQHLSLNLQGIGFDLVIGADRAPVRSPLMGRFNVDNLLTVAGVLYALDYALSEIAAVLSTLRPIHGRMNRLGGQDGQPVVVVDYAHTPDALGQVLSSLSSHVCGRLICVFGCGGERDRGKRSQMAVIAESNADVVLVTDDNPRGEDGDGIVADILAGFVRPNLVKVQRDRSAAIAAAIGIASAGDVVLIAGKGHERYQEVAGVRHPFDDTEVAMRVLAAMSAQETVR.

Ser-29 is a binding site for UDP-N-acetyl-alpha-D-muramoyl-L-alanyl-D-glutamate. 111–117 (GTNGKTS) lines the ATP pocket. UDP-N-acetyl-alpha-D-muramoyl-L-alanyl-D-glutamate contacts are provided by residues 153–154 (TT), Ser-180, Gln-186, and Arg-188. Lys-220 carries the N6-carboxylysine modification. Meso-2,6-diaminopimelate contacts are provided by residues Arg-384, 408 to 411 (DNPR), Gly-459, and Glu-463. The Meso-diaminopimelate recognition motif motif lies at 408-411 (DNPR).

Belongs to the MurCDEF family. MurE subfamily. Requires Mg(2+) as cofactor. Post-translationally, carboxylation is probably crucial for Mg(2+) binding and, consequently, for the gamma-phosphate positioning of ATP.

It is found in the cytoplasm. It carries out the reaction UDP-N-acetyl-alpha-D-muramoyl-L-alanyl-D-glutamate + meso-2,6-diaminopimelate + ATP = UDP-N-acetyl-alpha-D-muramoyl-L-alanyl-gamma-D-glutamyl-meso-2,6-diaminopimelate + ADP + phosphate + H(+). It functions in the pathway cell wall biogenesis; peptidoglycan biosynthesis. Functionally, catalyzes the addition of meso-diaminopimelic acid to the nucleotide precursor UDP-N-acetylmuramoyl-L-alanyl-D-glutamate (UMAG) in the biosynthesis of bacterial cell-wall peptidoglycan. In Xylella fastidiosa (strain Temecula1 / ATCC 700964), this protein is UDP-N-acetylmuramoyl-L-alanyl-D-glutamate--2,6-diaminopimelate ligase.